The chain runs to 383 residues: 1-deoxy-D-xylulose 5-phosphate reductoisomerase (383 aa).

The NADPH site is built by Thr10, Gly11, Ser12, Ile13, Gly36, Lys37, Asn38, and Asn122. Lys123 provides a ligand contact to 1-deoxy-D-xylulose 5-phosphate. Position 124 (Glu124) interacts with NADPH. Asp148 serves as a coordination point for Mn(2+). 1-deoxy-D-xylulose 5-phosphate contacts are provided by Ser149, Glu150, Ser174, and His197. Glu150 is a binding site for Mn(2+). Gly203 is an NADPH binding site. 4 residues coordinate 1-deoxy-D-xylulose 5-phosphate: Ser210, Asn215, Lys216, and Glu219. Glu219 lines the Mn(2+) pocket.

It belongs to the DXR family. The cofactor is Mg(2+). It depends on Mn(2+) as a cofactor.

The enzyme catalyses 2-C-methyl-D-erythritol 4-phosphate + NADP(+) = 1-deoxy-D-xylulose 5-phosphate + NADPH + H(+). Its pathway is isoprenoid biosynthesis; isopentenyl diphosphate biosynthesis via DXP pathway; isopentenyl diphosphate from 1-deoxy-D-xylulose 5-phosphate: step 1/6. In terms of biological role, catalyzes the NADPH-dependent rearrangement and reduction of 1-deoxy-D-xylulose-5-phosphate (DXP) to 2-C-methyl-D-erythritol 4-phosphate (MEP). This is 1-deoxy-D-xylulose 5-phosphate reductoisomerase from Bacillus velezensis (strain DSM 23117 / BGSC 10A6 / LMG 26770 / FZB42) (Bacillus amyloliquefaciens subsp. plantarum).